Reading from the N-terminus, the 194-residue chain is NADPH-flavin oxidoreductase (194 aa).

It belongs to the non-flavoprotein flavin reductase family. Homodimer. It can form an isobutylamine N-hydroxylase two component enzyme system formed of a flavin reductase component (VlmR) and a monooxygenase component (VlmH).

It carries out the reaction FADH2 + NADP(+) = FAD + NADPH + 2 H(+). The enzyme catalyses FMNH2 + NADP(+) = FMN + NADPH + 2 H(+). In terms of biological role, involved in the biosynthesis of the azoxy antibiotic valanimycin, which has an antitumor activity. Catalyzes the reduction of FAD/FMN to FADH(2)/FMNH(2) which are subsequently used for the hydroxylation of isobutylamine by the isobutylamine N-hydroxylase VlmH. It can reduce either FAD or flavin mononucleotide (FMN) but prefers FAD. The enzyme has a strong preference for NADPH as acceptor. The protein is NADPH-flavin oxidoreductase of Streptomyces viridifaciens.